The sequence spans 361 residues: MLFNLLYPLADEFQIFNLFRYITFRTGGAMVTALLISFVIGPRVIRWLKSVQGEGQPIRTDGPETHLKKKGTPTMGGLMILIAVIVSTLLWVDLANVYTWIVLLVTVGFGLIGFGDDFLKLTKRNTKGLSGRLKLAWTIAIAGVAATWYIAVTPHPLDTGLAVPFFKDLLVNLGWFFIPFAILVMVGASNAVNLTDGLDGLAIVPIMIAAATFGLIAYLSGNAIFAGYLQIHHVPGTGELAVFCGALVGAGLGFLWFNAPPAMVFMGDTGSLSMGGALGAVSVMTKHELVLAIVGGLFVLEAVSVMVQVASFKLTGKRVFRMAPIHHHFEKKGWSEPTVVIRFWIIAAILALVGLSTLKLR.

A run of 10 helical transmembrane segments spans residues 21-41 (YITFRTGGAMVTALLISFVIG), 72-92 (TPTMGGLMILIAVIVSTLLWV), 94-114 (LANVYTWIVLLVTVGFGLIGF), 135-155 (LAWTIAIAGVAATWYIAVTPH), 169-189 (LLVNLGWFFIPFAILVMVGAS), 200-220 (GLAIVPIMIAAATFGLIAYLS), 240-260 (LAVFCGALVGAGLGFLWFNAP), 263-283 (MVFMGDTGSLSMGGALGAVSV), 289-309 (LVLAIVGGLFVLEAVSVMVQV), and 338-358 (TVVIRFWIIAAILALVGLSTL).

This sequence belongs to the glycosyltransferase 4 family. MraY subfamily. Mg(2+) serves as cofactor.

It is found in the cell inner membrane. The catalysed reaction is UDP-N-acetyl-alpha-D-muramoyl-L-alanyl-gamma-D-glutamyl-meso-2,6-diaminopimeloyl-D-alanyl-D-alanine + di-trans,octa-cis-undecaprenyl phosphate = di-trans,octa-cis-undecaprenyl diphospho-N-acetyl-alpha-D-muramoyl-L-alanyl-D-glutamyl-meso-2,6-diaminopimeloyl-D-alanyl-D-alanine + UMP. It participates in cell wall biogenesis; peptidoglycan biosynthesis. In terms of biological role, catalyzes the initial step of the lipid cycle reactions in the biosynthesis of the cell wall peptidoglycan: transfers peptidoglycan precursor phospho-MurNAc-pentapeptide from UDP-MurNAc-pentapeptide onto the lipid carrier undecaprenyl phosphate, yielding undecaprenyl-pyrophosphoryl-MurNAc-pentapeptide, known as lipid I. This chain is Phospho-N-acetylmuramoyl-pentapeptide-transferase, found in Rhodospirillum centenum (strain ATCC 51521 / SW).